A 686-amino-acid chain; its full sequence is Probable metal-nicotianamine transporter YSL4 (686 aa).

14 helical membrane passes run tryptophan 27–valine 47, methionine 53–leucine 73, methionine 96–threonine 116, phenylalanine 151–isoleucine 171, valine 203–tyrosine 223, isoleucine 264–leucine 284, valine 308–threonine 328, isoleucine 373–methionine 393, valine 405–leucine 425, isoleucine 441–isoleucine 461, alanine 488–phenylalanine 508, cysteine 554–valine 574, phenylalanine 596–tryptophan 616, and alanine 629–leucine 649.

It belongs to the YSL (TC 2.A.67.2) family.

The protein resides in the membrane. In terms of biological role, may be involved in the transport of nicotianamine-chelated metals. In Oryza sativa subsp. japonica (Rice), this protein is Probable metal-nicotianamine transporter YSL4 (YSL4).